The sequence spans 602 residues: Pentatricopeptide repeat-containing protein At5g11310, mitochondrial (602 aa).

The N-terminal 35 residues, 1–35, are a transit peptide targeting the mitochondrion; the sequence is MNSLFTAFRRNLLLNPNPHRNFFLHRLLSSSRRSS. PPR repeat units lie at residues 134-165, 172-202, 211-241, 249-283, 284-318, 319-353, 354-388, 389-423, 424-458, 459-493, and 494-528; these read SPSL…VRSD, SADT…ARSY, ELRL…IGGT, SVRI…NVKP, TVVT…EMEI, NFMV…ESGP, TIVT…GVDP, TTTT…GHSP, DRLT…GIDP, DLLT…GIIP, and QYIT…PHSK.

Belongs to the PPR family. P subfamily.

The protein localises to the mitochondrion. This chain is Pentatricopeptide repeat-containing protein At5g11310, mitochondrial, found in Arabidopsis thaliana (Mouse-ear cress).